We begin with the raw amino-acid sequence, 202 residues long: Small ribosomal subunit protein uS4c (202 aa).

In terms of domain architecture, S4 RNA-binding spans 90 to 153 (MRLDNIIFRL…KSEAIISKNI (64 aa)).

This sequence belongs to the universal ribosomal protein uS4 family. In terms of assembly, part of the 30S ribosomal subunit. Contacts protein S5. The interaction surface between S4 and S5 is involved in control of translational fidelity.

The protein resides in the plastid. It is found in the chloroplast. Its function is as follows. One of the primary rRNA binding proteins, it binds directly to 16S rRNA where it nucleates assembly of the body of the 30S subunit. In terms of biological role, with S5 and S12 plays an important role in translational accuracy. The sequence is that of Small ribosomal subunit protein uS4c (rps4) from Leucodon sciuroides (Moss).